The primary structure comprises 77 residues: Translation initiation factor IF-1, chloroplastic (77 aa).

An S1-like domain is found at 1–71 (MKEQKWIHEG…SRGRIIYRLR (71 aa)).

This sequence belongs to the IF-1 family. Component of the 30S ribosomal translation pre-initiation complex which assembles on the 30S ribosome in the order IF-2 and IF-3, IF-1 and N-formylmethionyl-tRNA(fMet); mRNA recruitment can occur at any time during PIC assembly.

It is found in the plastid. It localises to the chloroplast. One of the essential components for the initiation of protein synthesis. Stabilizes the binding of IF-2 and IF-3 on the 30S subunit to which N-formylmethionyl-tRNA(fMet) subsequently binds. Helps modulate mRNA selection, yielding the 30S pre-initiation complex (PIC). Upon addition of the 50S ribosomal subunit IF-1, IF-2 and IF-3 are released leaving the mature 70S translation initiation complex. The protein is Translation initiation factor IF-1, chloroplastic of Buxus microphylla (Littleleaf boxwood).